A 575-amino-acid polypeptide reads, in one-letter code: 3-hydroxy-3-methylglutaryl-coenzyme A reductase 1 (575 aa).

The span at 1–13 shows a compositional bias: basic residues; that stretch reads MDTTGRLHHRKHA. The interval 1–25 is disordered; that stretch reads MDTTGRLHHRKHATPVEDRSPTTPK. 2 consecutive transmembrane segments (helical) span residues 29-49 and 73-93; these read ALPL…FSVA and EIVA…FFGI. The interval 97 to 160 is linker; that stretch reads QSFIARASHD…PLIAPLVSEE (64 aa). Residue N132 is glycosylated (N-linked (GlcNAc...) asparagine). The tract at residues 161–575 is catalytic; it reads DEMIVNSVVD…SSKDMSKAAS (415 aa). E254 acts as the Charge relay system in catalysis. Residue N318 is glycosylated (N-linked (GlcNAc...) asparagine). Residues K386 and D462 each act as charge relay system in the active site. Residues 531–551 form a helical membrane-spanning segment; the sequence is LLAAIVAGSVLAGELSLMSAI. The active-site Proton donor is the H560. The N-linked (GlcNAc...) asparagine glycan is linked to N564.

It belongs to the HMG-CoA reductase family.

It is found in the endoplasmic reticulum membrane. The protein localises to the mitochondrion membrane. It localises to the plastid membrane. It carries out the reaction (R)-mevalonate + 2 NADP(+) + CoA = (3S)-3-hydroxy-3-methylglutaryl-CoA + 2 NADPH + 2 H(+). Its pathway is metabolic intermediate biosynthesis; (R)-mevalonate biosynthesis; (R)-mevalonate from acetyl-CoA: step 3/3. Its function is as follows. Catalyzes the synthesis of mevalonate. The specific precursor of all isoprenoid compounds present in plants. This chain is 3-hydroxy-3-methylglutaryl-coenzyme A reductase 1 (HMGR1), found in Hevea brasiliensis (Para rubber tree).